Reading from the N-terminus, the 487-residue chain is Sugar transporter ERD6-like 6 (487 aa).

Position 2 is an N-acetylserine (S2). 12 helical membrane-spanning segments follow: residues 46–66 (ISVLACVLIVALGPIQFGFTC), 89–109 (VFGSLSNVGAMVGAIASGQIA), 115–135 (KGSLMIAAIPNIIGWLCISFA), 146–166 (LLEGFGVGIISYTVPVYIAEI), 178–198 (VNQLSVTIGIMLAYLLGLFVP), 201–221 (ILAVLGILPCTLLIPGLFFIP), 284–304 (LMVGIGLLVLQQLGGINGVLF), 320–340 (AATFGVGAIQVVATAISTWLV), 347–367 (LLLTISSVGMTISLVIVAAAF), 389–409 (VGVVAMVVFFSLGMGPIPWLI), 425–445 (IATLANWFFSWLITMTANLLL), and 451–471 (GTFTLYGLVCAFTVVFVTLWV).

Belongs to the major facilitator superfamily. Sugar transporter (TC 2.A.1.1) family.

The protein localises to the membrane. Its function is as follows. Sugar transporter. The chain is Sugar transporter ERD6-like 6 from Arabidopsis thaliana (Mouse-ear cress).